A 687-amino-acid chain; its full sequence is Homeobox-leucine zipper protein HDG12 (687 aa).

Residues 1 to 32 (MEFLGDSQNHDSSETEKKNKKKKRFHRHTPHQ) are disordered. The span at 8–17 (QNHDSSETEK) shows a compositional bias: basic and acidic residues. Residues 18–30 (KNKKKKRFHRHTP) show a composition bias toward basic residues. The homeobox DNA-binding region spans 21 to 80 (KKKRFHRHTPHQIQRLESTFNECQHPDEKQRNQLSRELGLAPRQIKFWFQNRRTQKKAQH). Positions 87–150 (ALKEENDKIR…LERVSSIAAK (64 aa)) form a coiled coil. Residues 206–440 (SEMDKSLMTN…LQRMCERFTN (235 aa)) form the START domain.

The protein belongs to the HD-ZIP homeobox family. Class IV subfamily. As to quaternary structure, interacts with BBM. As to expression, expressed in apical meristems and young epidermal tissue including trichomes and stipules. Expressed in lateral root tips, the L1 layer of apical inflorescence meristems and early flower primordia, carpel and stamen filament epidermis, stigma papillae, ovule primordia, nucellus and embryo.

Its subcellular location is the nucleus. Its function is as follows. Probable transcription factor that acts as a negative regulator of trichome branching in association with HDG11. Seems to promote cell differentiation. May regulate cell differentiation and proliferation during root and shoot meristem development. Acts as a positive regulator of SCL18/LAS expression. Involved, together with PDF2, in the regulation of flower organs development by promoting the expression of APETALA 3 (AP3) in the epidermis and internal cell layers of developing flowers. The polypeptide is Homeobox-leucine zipper protein HDG12 (Arabidopsis thaliana (Mouse-ear cress)).